Reading from the N-terminus, the 200-residue chain is Imidazole glycerol phosphate synthase subunit HisH (200 aa).

The 198-residue stretch at 3-200 folds into the Glutamine amidotransferase type-1 domain; that stretch reads EVALIDAGGA…LRNFLEMDAA (198 aa). Catalysis depends on C78, which acts as the Nucleophile. Catalysis depends on residues H179 and E181.

In terms of assembly, heterodimer of HisH and HisF.

It localises to the cytoplasm. The enzyme catalyses 5-[(5-phospho-1-deoxy-D-ribulos-1-ylimino)methylamino]-1-(5-phospho-beta-D-ribosyl)imidazole-4-carboxamide + L-glutamine = D-erythro-1-(imidazol-4-yl)glycerol 3-phosphate + 5-amino-1-(5-phospho-beta-D-ribosyl)imidazole-4-carboxamide + L-glutamate + H(+). It carries out the reaction L-glutamine + H2O = L-glutamate + NH4(+). Its pathway is amino-acid biosynthesis; L-histidine biosynthesis; L-histidine from 5-phospho-alpha-D-ribose 1-diphosphate: step 5/9. Its function is as follows. IGPS catalyzes the conversion of PRFAR and glutamine to IGP, AICAR and glutamate. The HisH subunit catalyzes the hydrolysis of glutamine to glutamate and ammonia as part of the synthesis of IGP and AICAR. The resulting ammonia molecule is channeled to the active site of HisF. The chain is Imidazole glycerol phosphate synthase subunit HisH from Xylella fastidiosa (strain Temecula1 / ATCC 700964).